Here is a 147-residue protein sequence, read N- to C-terminus: D-aminoacyl-tRNA deacylase (147 aa).

The Gly-cisPro motif, important for rejection of L-amino acids signature appears at 139-140; it reads GP.

This sequence belongs to the DTD family. In terms of assembly, homodimer.

Its subcellular location is the cytoplasm. It catalyses the reaction glycyl-tRNA(Ala) + H2O = tRNA(Ala) + glycine + H(+). It carries out the reaction a D-aminoacyl-tRNA + H2O = a tRNA + a D-alpha-amino acid + H(+). Its function is as follows. An aminoacyl-tRNA editing enzyme that deacylates mischarged D-aminoacyl-tRNAs. Also deacylates mischarged glycyl-tRNA(Ala), protecting cells against glycine mischarging by AlaRS. Acts via tRNA-based rather than protein-based catalysis; rejects L-amino acids rather than detecting D-amino acids in the active site. By recycling D-aminoacyl-tRNA to D-amino acids and free tRNA molecules, this enzyme counteracts the toxicity associated with the formation of D-aminoacyl-tRNA entities in vivo and helps enforce protein L-homochirality. The chain is D-aminoacyl-tRNA deacylase from Rippkaea orientalis (strain PCC 8801 / RF-1) (Cyanothece sp. (strain PCC 8801)).